A 177-amino-acid polypeptide reads, in one-letter code: Small ribosomal subunit protein uS5 (177 aa).

An S5 DRBM domain is found at 21 to 84 (LKEKMVSVNR…DEARQRMVRV (64 aa)).

This sequence belongs to the universal ribosomal protein uS5 family. As to quaternary structure, part of the 30S ribosomal subunit. Contacts proteins S4 and S8.

Functionally, with S4 and S12 plays an important role in translational accuracy. Its function is as follows. Located at the back of the 30S subunit body where it stabilizes the conformation of the head with respect to the body. The chain is Small ribosomal subunit protein uS5 from Nitrosomonas europaea (strain ATCC 19718 / CIP 103999 / KCTC 2705 / NBRC 14298).